We begin with the raw amino-acid sequence, 192 residues long: Ion-translocating oxidoreductase complex subunit A (192 aa).

6 helical membrane passes run 5-25 (LLLL…FLGL), 39-59 (IGMS…SYLV), 65-85 (LPFD…AVVV), 102-122 (ALGI…VALL), 134-154 (AIYG…FSAM), and 171-191 (AIAM…TGLV).

This sequence belongs to the NqrDE/RnfAE family. The complex is composed of six subunits: RnfA, RnfB, RnfC, RnfD, RnfE and RnfG.

It is found in the cell inner membrane. Functionally, part of a membrane-bound complex that couples electron transfer with translocation of ions across the membrane. The chain is Ion-translocating oxidoreductase complex subunit A from Shewanella putrefaciens (strain CN-32 / ATCC BAA-453).